Here is a 181-residue protein sequence, read N- to C-terminus: Shikimate kinase (181 aa).

11–16 contributes to the ATP binding site; the sequence is GAGKSK. Mg(2+) is bound at residue S15. 3 residues coordinate substrate: D33, R58, and G80. R128 is an ATP binding site. R144 lines the substrate pocket.

It belongs to the shikimate kinase family. As to quaternary structure, monomer. Mg(2+) is required as a cofactor.

It is found in the cytoplasm. The enzyme catalyses shikimate + ATP = 3-phosphoshikimate + ADP + H(+). It functions in the pathway metabolic intermediate biosynthesis; chorismate biosynthesis; chorismate from D-erythrose 4-phosphate and phosphoenolpyruvate: step 5/7. Its function is as follows. Catalyzes the specific phosphorylation of the 3-hydroxyl group of shikimic acid using ATP as a cosubstrate. The polypeptide is Shikimate kinase (Leptospira biflexa serovar Patoc (strain Patoc 1 / Ames)).